Here is a 331-residue protein sequence, read N- to C-terminus: Putative sigma L-dependent transcriptional regulator YplP (331 aa).

The Sigma-54 factor interaction domain occupies 12 to 213 (HLIGEHQTFL…LKNAADYMAA (202 aa)). 95–104 (AVRGTLFLDD) serves as a coordination point for ATP.

May play a role in cold adaptation. The protein is Putative sigma L-dependent transcriptional regulator YplP (yplP) of Bacillus subtilis (strain 168).